The primary structure comprises 333 residues: tRNA uridine(34) hydroxylase (333 aa).

The Rhodanese domain maps to 123 to 217 (SDPEVVLVDT…YLEEVNKAES (95 aa)). Cys177 (cysteine persulfide intermediate) is an active-site residue. The segment covering 313–327 (QKKEALRKQSAEKNK) has biased composition (basic and acidic residues). The disordered stretch occupies residues 313–333 (QKKEALRKQSAEKNKAKQANA).

Belongs to the TrhO family.

It carries out the reaction uridine(34) in tRNA + AH2 + O2 = 5-hydroxyuridine(34) in tRNA + A + H2O. Functionally, catalyzes oxygen-dependent 5-hydroxyuridine (ho5U) modification at position 34 in tRNAs. This is tRNA uridine(34) hydroxylase from Shewanella oneidensis (strain ATCC 700550 / JCM 31522 / CIP 106686 / LMG 19005 / NCIMB 14063 / MR-1).